The chain runs to 239 residues: Large ribosomal subunit protein uL1 (239 aa).

It belongs to the universal ribosomal protein uL1 family. Part of the 50S ribosomal subunit.

Functionally, binds directly to 23S rRNA. The L1 stalk is quite mobile in the ribosome, and is involved in E site tRNA release. In terms of biological role, protein L1 is also a translational repressor protein, it controls the translation of the L11 operon by binding to its mRNA. The sequence is that of Large ribosomal subunit protein uL1 from Rickettsia rickettsii (strain Iowa).